A 54-amino-acid chain; its full sequence is Ribulose bisphosphate carboxylase large chain (54 aa).

The propeptide occupies 1 to 2 (MS). Position 3 is an N-acetylproline (proline 3). The residue at position 14 (lysine 14) is an N6,N6,N6-trimethyllysine.

It belongs to the RuBisCO large chain family. Type I subfamily. In terms of assembly, heterohexadecamer of 8 large chains and 8 small chains.

It localises to the plastid. The protein localises to the chloroplast. It catalyses the reaction 2 (2R)-3-phosphoglycerate + 2 H(+) = D-ribulose 1,5-bisphosphate + CO2 + H2O. It carries out the reaction D-ribulose 1,5-bisphosphate + O2 = 2-phosphoglycolate + (2R)-3-phosphoglycerate + 2 H(+). In terms of biological role, ruBisCO catalyzes two reactions: the carboxylation of D-ribulose 1,5-bisphosphate, the primary event in carbon dioxide fixation, as well as the oxidative fragmentation of the pentose substrate in the photorespiration process. Both reactions occur simultaneously and in competition at the same active site. The chain is Ribulose bisphosphate carboxylase large chain (rbcL) from Ilex aquifolium (English holly).